A 222-amino-acid chain; its full sequence is Sigma non-opioid intracellular receptor 1 (222 aa).

The Lumenal segment spans residues 1–7 (MGVAGPW). Residues 8 to 29 (VLRVGLGLGAFALLLQGLRGWL) form a helical membrane-spanning segment. At 30-222 (ACKRYEFQPA…ASAFFSTLGC (193 aa)) the chain is on the cytoplasmic side. Residues 98–105 (SLTEYVLL) are important for ligand-binding. The C-terminal hydrophobic region stretch occupies residues 176–222 (FVPSTLAFALADTLFSTQDFITLFYTLRAYTKGLLLEASAFFSTLGC).

Belongs to the ERG2 family. As to quaternary structure, homotrimer.

It is found in the nucleus inner membrane. Its subcellular location is the nucleus outer membrane. The protein localises to the nucleus envelope. The protein resides in the cytoplasmic vesicle. It localises to the endoplasmic reticulum membrane. It is found in the membrane. Functionally, may function in lipid transport from the endoplasmic reticulum and be involved in a wide array of cellular functions probably through regulation of the biogenesis of lipid microdomains at the plasma membrane. May regulate calcium efflux at the endoplasmic reticulum. The chain is Sigma non-opioid intracellular receptor 1 (SIGMAR1) from Gallus gallus (Chicken).